Reading from the N-terminus, the 513-residue chain is GMP synthase [glutamine-hydrolyzing] (513 aa).

Positions 9-198 (MILVLDFGSQ…VRRICDCTGE (190 aa)) constitute a Glutamine amidotransferase type-1 domain. The active-site Nucleophile is cysteine 86. Active-site residues include histidine 172 and glutamate 174. A GMPS ATP-PPase domain is found at 199–388 (WTMENFIDLE…LGIPEHLVWR (190 aa)). 226-232 (SGGVDSS) is an ATP binding site.

Homodimer.

It catalyses the reaction XMP + L-glutamine + ATP + H2O = GMP + L-glutamate + AMP + diphosphate + 2 H(+). It functions in the pathway purine metabolism; GMP biosynthesis; GMP from XMP (L-Gln route): step 1/1. In terms of biological role, catalyzes the synthesis of GMP from XMP. This chain is GMP synthase [glutamine-hydrolyzing], found in Staphylococcus carnosus (strain TM300).